The chain runs to 160 residues: Photosystem I reaction center subunit XI (160 aa).

Transmembrane regions (helical) follow at residues 84 to 104 (LIPALAMVLLATGCLASYGLV) and 125 to 145 (FAAGFFIGGMGGAFVAYFLLE).

This sequence belongs to the PsaL family.

It is found in the cellular thylakoid membrane. This chain is Photosystem I reaction center subunit XI, found in Microcystis aeruginosa (strain NIES-843 / IAM M-2473).